A 184-amino-acid chain; its full sequence is ATP-dependent protease subunit HslV (184 aa).

The active site involves Thr-12. Na(+) contacts are provided by Ala-166, Cys-169, and Thr-172.

It belongs to the peptidase T1B family. HslV subfamily. As to quaternary structure, a double ring-shaped homohexamer of HslV is capped on each side by a ring-shaped HslU homohexamer. The assembly of the HslU/HslV complex is dependent on binding of ATP.

The protein localises to the cytoplasm. It carries out the reaction ATP-dependent cleavage of peptide bonds with broad specificity.. Allosterically activated by HslU binding. In terms of biological role, protease subunit of a proteasome-like degradation complex believed to be a general protein degrading machinery. In Brucella anthropi (strain ATCC 49188 / DSM 6882 / CCUG 24695 / JCM 21032 / LMG 3331 / NBRC 15819 / NCTC 12168 / Alc 37) (Ochrobactrum anthropi), this protein is ATP-dependent protease subunit HslV.